The following is a 264-amino-acid chain: 3-methyl-2-oxobutanoate hydroxymethyltransferase (264 aa).

Residues D45 and D84 each contribute to the Mg(2+) site. 3-methyl-2-oxobutanoate-binding positions include 45–46, D84, and K112; that span reads DS. E114 lines the Mg(2+) pocket. Catalysis depends on E181, which acts as the Proton acceptor.

This sequence belongs to the PanB family. In terms of assembly, homodecamer; pentamer of dimers. Requires Mg(2+) as cofactor.

It localises to the cytoplasm. It catalyses the reaction 3-methyl-2-oxobutanoate + (6R)-5,10-methylene-5,6,7,8-tetrahydrofolate + H2O = 2-dehydropantoate + (6S)-5,6,7,8-tetrahydrofolate. Its pathway is cofactor biosynthesis; (R)-pantothenate biosynthesis; (R)-pantoate from 3-methyl-2-oxobutanoate: step 1/2. Catalyzes the reversible reaction in which hydroxymethyl group from 5,10-methylenetetrahydrofolate is transferred onto alpha-ketoisovalerate to form ketopantoate. This is 3-methyl-2-oxobutanoate hydroxymethyltransferase from Vibrio parahaemolyticus serotype O3:K6 (strain RIMD 2210633).